The sequence spans 147 residues: uncharacterized protein (147 aa).

2 consecutive transmembrane segments (helical) span residues Leu-41–Ile-61 and Leu-67–Leu-87.

The protein localises to the cell membrane. This is an uncharacterized protein from Pyrococcus horikoshii (strain ATCC 700860 / DSM 12428 / JCM 9974 / NBRC 100139 / OT-3).